An 83-amino-acid polypeptide reads, in one-letter code: Hainantoxin-III 4 (83 aa).

Residues 1–21 form the signal peptide; the sequence is MKASMYLALAGLVLLFVVGYA. Positions 22 to 48 are excised as a propeptide; it reads SESEEKEFPRELLSKIFAVDDFKGKER. Disulfide bonds link cysteine 50–cysteine 65, cysteine 57–cysteine 70, and cysteine 64–cysteine 77. Leucine 81 is modified (leucine amide).

It belongs to the neurotoxin 10 (Hwtx-1) family. 15 (Hntx-3) subfamily. Monomer. As to expression, expressed by the venom gland.

It is found in the secreted. Its function is as follows. Selective antagonist of neuronal tetrodotoxin (TTX)-sensitive voltage-gated sodium channels (IC(50)=1270 nM on Nav1.1/SCN1A, 270 nM on Nav1.2/SCN2A, 491 nM on Nav1.3/SCN3A and 232 nM on Nav1.7/SCN9A). This toxin suppress Nav1.7 current amplitude without significantly altering the activation, inactivation, and repriming kinetics. Short extreme depolarizations partially activate the toxin-bound channel, indicating voltage-dependent inhibition of this toxin. This toxin increases the deactivation of the Nav1.7 current after extreme depolarizations. The toxin-Nav1.7 complex is gradually dissociated upon prolonged strong depolarizations in a voltage-dependent manner, and the unbound toxin rebinds to Nav1.7 after a long repolarization. Moreover, analysis of chimeric channels showed that the DIIS3-S4 linker is critical for toxin binding to Nav1.7. These data are consistent with this toxin interacting with Nav1.7 site 4 and trapping the domain II voltage sensor in the closed state. In Cyriopagopus hainanus (Chinese bird spider), this protein is Hainantoxin-III 4.